A 466-amino-acid polypeptide reads, in one-letter code: GTP cyclohydrolase 1 (466 aa).

Zn(2+)-binding residues include Cys-342, His-345, and Cys-416.

Belongs to the GTP cyclohydrolase I family. Homodimer.

It catalyses the reaction GTP + H2O = 7,8-dihydroneopterin 3'-triphosphate + formate + H(+). It participates in cofactor biosynthesis; 7,8-dihydroneopterin triphosphate biosynthesis; 7,8-dihydroneopterin triphosphate from GTP: step 1/1. Functionally, GTP cyclohydrolase 1 is the first enzyme in the biosynthetic pathway leading to folic acid. In Arabidopsis thaliana (Mouse-ear cress), this protein is GTP cyclohydrolase 1 (GCH1).